The following is a 249-amino-acid chain: Diaminopimelate epimerase (249 aa).

2 residues coordinate substrate: asparagine 11 and asparagine 60. Cysteine 69 serves as the catalytic Proton donor. Substrate is bound by residues 70–71 (GN), asparagine 164, and 182–183 (ER). Cysteine 192 acts as the Proton acceptor in catalysis. 193 to 194 (GT) serves as a coordination point for substrate.

The protein belongs to the diaminopimelate epimerase family. As to quaternary structure, homodimer.

The protein resides in the cytoplasm. The catalysed reaction is (2S,6S)-2,6-diaminopimelate = meso-2,6-diaminopimelate. The protein operates within amino-acid biosynthesis; L-lysine biosynthesis via DAP pathway; DL-2,6-diaminopimelate from LL-2,6-diaminopimelate: step 1/1. In terms of biological role, catalyzes the stereoinversion of LL-2,6-diaminopimelate (L,L-DAP) to meso-diaminopimelate (meso-DAP), a precursor of L-lysine and an essential component of the bacterial peptidoglycan. The polypeptide is Diaminopimelate epimerase (Campylobacter lari (strain RM2100 / D67 / ATCC BAA-1060)).